Here is a 503-residue protein sequence, read N- to C-terminus: Maturase K (503 aa).

It belongs to the intron maturase 2 family. MatK subfamily.

The protein resides in the plastid. Its subcellular location is the chloroplast. Functionally, usually encoded in the trnK tRNA gene intron. Probably assists in splicing its own and other chloroplast group II introns. The chain is Maturase K from Syzygium australe (Brush cherry).